The following is a 182-amino-acid chain: Probable RNA 2'-phosphotransferase (182 aa).

This sequence belongs to the KptA/TPT1 family.

Its function is as follows. Removes the 2'-phosphate from RNA via an intermediate in which the phosphate is ADP-ribosylated by NAD followed by a presumed transesterification to release the RNA and generate ADP-ribose 1''-2''-cyclic phosphate (APPR&gt;P). May function as an ADP-ribosylase. The polypeptide is Probable RNA 2'-phosphotransferase (Pseudomonas aeruginosa (strain UCBPP-PA14)).